Consider the following 120-residue polypeptide: Large ribosomal subunit protein uL14 (120 aa).

The protein belongs to the universal ribosomal protein uL14 family. As to quaternary structure, part of the 50S ribosomal subunit. Forms a cluster with proteins L3 and L19. In the 70S ribosome, L14 and L19 interact and together make contacts with the 16S rRNA in bridges B5 and B8.

Functionally, binds to 23S rRNA. Forms part of two intersubunit bridges in the 70S ribosome. The polypeptide is Large ribosomal subunit protein uL14 (Phytoplasma australiense).